The sequence spans 373 residues: tRNA-specific 2-thiouridylase MnmA (373 aa).

Residues 12–19 and methionine 38 contribute to the ATP site; that span reads GMSGGVDS. The tract at residues 98 to 100 is interaction with target base in tRNA; the sequence is NPD. Cysteine 103 acts as the Nucleophile in catalysis. Cysteine 103 and cysteine 200 are disulfide-bonded. Glycine 127 is an ATP binding site. Positions 150 to 152 are interaction with tRNA; the sequence is KDQ. Cysteine 200 functions as the Cysteine persulfide intermediate in the catalytic mechanism. The segment at 312–313 is interaction with tRNA; it reads RY.

This sequence belongs to the MnmA/TRMU family.

It localises to the cytoplasm. It carries out the reaction S-sulfanyl-L-cysteinyl-[protein] + uridine(34) in tRNA + AH2 + ATP = 2-thiouridine(34) in tRNA + L-cysteinyl-[protein] + A + AMP + diphosphate + H(+). Catalyzes the 2-thiolation of uridine at the wobble position (U34) of tRNA, leading to the formation of s(2)U34. The chain is tRNA-specific 2-thiouridylase MnmA from Streptococcus thermophilus (strain CNRZ 1066).